Reading from the N-terminus, the 272-residue chain is MVKAIKIDNLKYSYDERSLFSDFNLDIDAGQWVALVGHNGSGKSTLAKLILGLLVAEQGDIDVFDERLTVETVHHVRSKIGMVFQNPDNQFVGATVADDVAFGLENIQVESSEMPQKIDNALTIVGMQEFKNREPHTLSGGQKQRVALASVLALQPKIIILDEATAMLDPDGRATVMETLQKLKKQFGKELTLVTITHDMDEATLADRVVVINDGQKILDGTPAEVFSQRKALHENGLELPFANELAFHLNEKPNKYMDERELIQWLSTLNK.

The region spanning 5–239 is the ABC transporter domain; that stretch reads IKIDNLKYSY…RKALHENGLE (235 aa). 37–44 provides a ligand contact to ATP; the sequence is GHNGSGKS. Catalysis depends on glutamate 163, which acts as the Proton acceptor.

The protein belongs to the ABC transporter superfamily. Energy-coupling factor EcfA family. As to quaternary structure, forms a stable energy-coupling factor (ECF) transporter complex probably composed of 2 membrane-embedded substrate-binding proteins (S component), 2 ATP-binding proteins (A component) and 2 transmembrane proteins (T component). This complex interacts with a number of substrate-specific components, including FolT, PanT and RibU for 5-formyltetrahydrofolate, pantothenate and riboflavin respectively.

It localises to the cell membrane. Its function is as follows. ATP-binding (A) component of a common energy-coupling factor (ECF) ABC-transporter complex. Unlike classic ABC transporters this ECF transporter provides the energy necessary to transport a number of different substrates including 5-formyltetrahydrofolate, pantothenate and riboflavin. Expression of the complex plus FolT in E.coli allows 5-formyltetrahydrofolate uptake; 5-formyltetrahydrofolate is not taken up in the absence of FolT or the EcfA1A2T complex. The protein is Energy-coupling factor transporter ATP-binding protein EcfA1 of Leuconostoc mesenteroides subsp. mesenteroides (strain ATCC 8293 / DSM 20343 / BCRC 11652 / CCM 1803 / JCM 6124 / NCDO 523 / NBRC 100496 / NCIMB 8023 / NCTC 12954 / NRRL B-1118 / 37Y).